The sequence spans 620 residues: MTTEHLDRIHSPADLRKLDRRDLKPIADELRAFVLESVSKTGGHLSSNLGTVELTLALHYVFDTPHDRIVWDVGHQTYPHKILTGRRDRMATLRQEGGISGFPKRSESEYDDFGTAHSSTSISAALGMAVASRNAGVARQHIAVIGDGAMSAGMAFEAMNNAGVTSDINLLVILNDNDMSISPPVGALNRYLARLMSGRFYAAAKNMGKAVLQHVPPVLELARRFEEHAKGMITSATMFEEFGFNYVGPIDGHDLDALIPTLQNLKTLQGLQFLHVVTRKGRGYKLAEVDPVLYHGPGKFDPAVGIQAAKTPAKRTFTQVFGAWLCDQAEADPRLVGITPAMREGSGLVEFEQRFPKRYFDVGIAEQHAVTFAAGLACEGQKPVVAIYSTFLQRGYDQVVHDVALQNLDVTFALDRAGLVGADGATHAGNYDIAFLRCVPNMVIATPSDENETRLLLSTCYAYPGPASVRYPRGAGCGAAVSAGLDTVPLGKGVVRRRGARIAIMGFGTLVPAALAAAEKLDATVADMRFVKPLDVELLRELAATHEALVTLEDAAVMGGAGSAVTEALNMAGLTLPVLQLGLPDVFIDHGDQAALLAGVGLDAAGIERSVRERFASLLG.

Thiamine diphosphate is bound by residues histidine 75 and 116 to 118 (AHS). Residue aspartate 147 coordinates Mg(2+). Thiamine diphosphate is bound by residues 148–149 (GA), asparagine 177, tyrosine 284, and glutamate 366. Asparagine 177 is a binding site for Mg(2+).

This sequence belongs to the transketolase family. DXPS subfamily. In terms of assembly, homodimer. Mg(2+) serves as cofactor. The cofactor is thiamine diphosphate.

The enzyme catalyses D-glyceraldehyde 3-phosphate + pyruvate + H(+) = 1-deoxy-D-xylulose 5-phosphate + CO2. The protein operates within metabolic intermediate biosynthesis; 1-deoxy-D-xylulose 5-phosphate biosynthesis; 1-deoxy-D-xylulose 5-phosphate from D-glyceraldehyde 3-phosphate and pyruvate: step 1/1. Functionally, catalyzes the acyloin condensation reaction between C atoms 2 and 3 of pyruvate and glyceraldehyde 3-phosphate to yield 1-deoxy-D-xylulose-5-phosphate (DXP). The polypeptide is 1-deoxy-D-xylulose-5-phosphate synthase (Bordetella avium (strain 197N)).